Consider the following 90-residue polypeptide: Protein LURE 1.5 (90 aa).

The first 19 residues, 1–19, serve as a signal peptide directing secretion; that stretch reads MKLPIIFLTLLIFVSSCTS. Cystine bridges form between Cys58/Cys75 and Cys61/Cys82.

This sequence belongs to the DEFL family. As to expression, expressed in the pistil. Detected exclusively in the synergid cells.

The protein localises to the secreted. Its function is as follows. Inactive pollen tube attractants guiding pollen tubes to the ovular micropyle. This is Protein LURE 1.5 from Arabidopsis thaliana (Mouse-ear cress).